The following is a 283-amino-acid chain: Phosphatidylglycerol--prolipoprotein diacylglyceryl transferase (283 aa).

3 consecutive transmembrane segments (helical) span residues 17-37 (LAVR…TFLG), 56-76 (FLTW…VLFY), and 92-112 (WEGG…IWLF). Residue R139 participates in a 1,2-diacyl-sn-glycero-3-phospho-(1'-sn-glycerol) binding. 2 helical membrane-spanning segments follow: residues 222–242 (GQTA…AEFA) and 255–275 (GLSM…VGFV).

Belongs to the Lgt family.

It localises to the cell inner membrane. It catalyses the reaction L-cysteinyl-[prolipoprotein] + a 1,2-diacyl-sn-glycero-3-phospho-(1'-sn-glycerol) = an S-1,2-diacyl-sn-glyceryl-L-cysteinyl-[prolipoprotein] + sn-glycerol 1-phosphate + H(+). It functions in the pathway protein modification; lipoprotein biosynthesis (diacylglyceryl transfer). Catalyzes the transfer of the diacylglyceryl group from phosphatidylglycerol to the sulfhydryl group of the N-terminal cysteine of a prolipoprotein, the first step in the formation of mature lipoproteins. In Neisseria gonorrhoeae (strain ATCC 700825 / FA 1090), this protein is Phosphatidylglycerol--prolipoprotein diacylglyceryl transferase.